The chain runs to 111 residues: Small ribosomal subunit protein uS17 (111 aa).

This sequence belongs to the universal ribosomal protein uS17 family. Part of the 30S ribosomal subunit.

Its function is as follows. One of the primary rRNA binding proteins, it binds specifically to the 5'-end of 16S ribosomal RNA. The polypeptide is Small ribosomal subunit protein uS17 (Methanocella arvoryzae (strain DSM 22066 / NBRC 105507 / MRE50)).